Reading from the N-terminus, the 328-residue chain is Pleckstrin homology domain protein OPY1 (328 aa).

The interval 19–52 (NLIKKPSTSQNKTPTAQSSSGNNGAADGAPQGYH) is disordered. Positions 24–41 (PSTSQNKTPTAQSSSGNN) are enriched in polar residues. The segment at 213 to 328 (AEHQVCSGIL…IRKKLKAENI (116 aa)) is required for targeting to the cell membrane. In terms of domain architecture, PH spans 215–318 (HQVCSGILYT…WIINFKSGIL (104 aa)).

As to quaternary structure, interacts with MSS4 (via N-terminus); to negatively regulate MSS4 kinase activity.

It is found in the cell membrane. The protein localises to the cytoplasm. Functionally, binds phosphatidylinositol 4,5-bisphosphate (PtdIns(4,5)P2/PIP2) at the cell membrane. Negatively regulates the activity of phosphatidylinositol 4-phosphate 5-kinase MSS4. In Saccharomyces cerevisiae (strain ATCC 204508 / S288c) (Baker's yeast), this protein is Pleckstrin homology domain protein OPY1 (OPY1).